Reading from the N-terminus, the 401-residue chain is Argininosuccinate synthase (401 aa).

9–17 (AYSGGLDTS) provides a ligand contact to ATP. Residue Tyr88 coordinates L-citrulline. Gly118 contacts ATP. Residues Thr120, Asn124, and Asp125 each contribute to the L-aspartate site. Residue Asn124 coordinates L-citrulline. Positions 128, 176, 185, 261, and 273 each coordinate L-citrulline.

The protein belongs to the argininosuccinate synthase family. Type 1 subfamily. In terms of assembly, homotetramer.

It is found in the cytoplasm. It catalyses the reaction L-citrulline + L-aspartate + ATP = 2-(N(omega)-L-arginino)succinate + AMP + diphosphate + H(+). The protein operates within amino-acid biosynthesis; L-arginine biosynthesis; L-arginine from L-ornithine and carbamoyl phosphate: step 2/3. The protein is Argininosuccinate synthase of Symbiobacterium thermophilum (strain DSM 24528 / JCM 14929 / IAM 14863 / T).